The sequence spans 222 residues: Uridine diphosphate glucose pyrophosphatase NUDT14 (222 aa).

In terms of domain architecture, Nudix hydrolase spans 38-206; sequence KTHDSVTILM…DIPKTLGVIY (169 aa). Residues 111 to 129 carry the Nudix box motif; it reads PGLSLEEAACKEAWEECGY.

Belongs to the Nudix hydrolase family. In terms of assembly, homodimer. Mg(2+) is required as a cofactor.

The protein resides in the cytoplasm. It carries out the reaction UDP-sugar + H2O = UMP + alpha-D-aldose 1-phosphate.. Its function is as follows. Hydrolyzes UDP-glucose to glucose 1-phosphate and UMP and ADP-ribose to ribose 5-phosphate and AMP. The physiological substrate is probably UDP-glucose. Poor activity on other substrates such as ADP-glucose, CDP-glucose, GDP-glucose and GDP-mannose. The polypeptide is Uridine diphosphate glucose pyrophosphatase NUDT14 (Nudt14) (Mus musculus (Mouse)).